Here is a 418-residue protein sequence, read N- to C-terminus: Actin-related protein 3 (418 aa).

This sequence belongs to the actin family. ARP3 subfamily. Component of the Arp2/3 complex.

The protein localises to the cytoplasm. Its subcellular location is the cytoskeleton. Functionally, functions as ATP-binding component of the Arp2/3 complex which is involved in regulation of actin polymerization and together with an activating nucleation-promoting factor (NPF) mediates the formation of branched actin networks. Seems to contact the pointed end of the daughter actin filament. Required during embryogenesis for the developmental migration of tail hemocytes anteriorly, along the ventral midline. In Drosophila melanogaster (Fruit fly), this protein is Actin-related protein 3.